Here is an 808-residue protein sequence, read N- to C-terminus: MKFYCLIRFMIIANLYSSYQISLPGTYPSQILLDMKNSPLVRFNISTRDYKDETLWIRKNSTFVYIDTAVTTANVIFYLPIGQVRQMVFFKRPISRLLTSNNLVKFINTGSYANHTFKTELSPYLSKTNTPLKKYEIVVDQPTGENPPAGFGSLKPADFLNPGYKFVLTSELVGAYTKRSCFVDPMDSLVPIDYDHVRTIIFGSAGMEILMKMGITLASMTISTKYNPPIELIISAKYRNLSLLWPPRQQYEPVNKGTGRPHWIYLLGVYRNVSDSERDSYMNMIKSLGDSMDYHFLISRAHAQMLILAAEDRLVDEMHSFRNVIARLFVSLFAFIRNAFQSGYTSLNDIIEIEADLRLIVEGISSAAFRKDASTHFLISGTPIKDSKADLIKSLLSKVIRPISGHTRPLSAIQHLFLLRSAYALDIPRQNGSLSEQVSTVALSFIENIHSEAMRDILSWNTTTKHALYYAFASILQRPLTEWGASRNARRAILLASSMCTEEHVIATELAIQELYVKIRSNADPIHLLDVYTPCLSSLRLDLSEHHRIYAMADVVFYPDIQQYLKKKSHEGNMKEDDLETKAEYILTKLRSPLIRTLSAYASEVLSCSDQDLLEINAILILPVSGIGSYVVSRRAGMQGIVYTVDGVDVNNQLFITYTRMPCTTTIGNIVPTVLSRPSGKTCPYCGCVLLRYSADGNIRYSIYISSPKLQSELIAFGNSSIRRFNPTTAQIYGNSLLLYPNGTIVRILAFESERVTIISATYIATAVAGSIIALTVIVITVRMIIINMRYNYQGYNKVIDVDDDIRN.

An N-terminal signal peptide occupies residues 1-17; the sequence is MKFYCLIRFMIIANLYS. The Virion surface segment spans residues 18–761; that stretch reads SYQISLPGTY…ESERVTIISA (744 aa). Asn-44, Asn-60, Asn-114, Asn-240, Asn-272, Asn-431, Asn-461, Asn-719, and Asn-742 each carry an N-linked (GlcNAc...) asparagine; by host glycan. Residues 205-266 form an interaction with gL region; the sequence is AGMEILMKMG…GTGRPHWIYL (62 aa). Residues 762 to 782 traverse the membrane as a helical segment; the sequence is TYIATAVAGSIIALTVIVITV. The Intravirion portion of the chain corresponds to 783–808; the sequence is RMIIINMRYNYQGYNKVIDVDDDIRN.

This sequence belongs to the herpesviridae glycoprotein H family. In terms of assembly, interacts with glycoprotein L (gL); this interaction is necessary for the correct processing and cell surface expression of gH. The heterodimer gH/gL seems to interact with gB trimers during fusion. Post-translationally, N-glycosylated, O-glycosylated, and sialylated.

The protein localises to the virion membrane. It is found in the host cell membrane. The protein resides in the host endosome membrane. In terms of biological role, the heterodimer glycoprotein H-glycoprotein L is required for the fusion of viral and plasma membranes leading to virus entry into the host cell. Following initial binding to host receptor, membrane fusion is mediated by the fusion machinery composed of gB and the heterodimer gH/gL. May also be involved in the fusion between the virion envelope and the outer nuclear membrane during virion morphogenesis. In Gallus gallus (Chicken), this protein is Envelope glycoprotein H.